The following is a 316-amino-acid chain: Olfactory receptor 2G6 (316 aa).

Residues 1–25 (MEETNNSSEKGFLLLGFSDQPQLER) are Extracellular-facing. 2 N-linked (GlcNAc...) asparagine glycosylation sites follow: Asn5 and Asn6. The helical transmembrane segment at 26-49 (FLFAIILYFYVLSLLGNTALILVC) threads the bilayer. At 50-57 (CLDSRLHT) the chain is on the cytoplasmic side. A helical membrane pass occupies residues 58–79 (PMYFFLSNLSCVDICFTTSVAP). Topologically, residues 80–100 (QLLVTMNKKDKTMSYGGCVAQ) are extracellular. A disulfide bridge connects residues Cys97 and Cys189. A helical transmembrane segment spans residues 101–120 (LYVAMGLGSSECILLAVMAY). Residues 121-139 (DRYAAVCRPLRYIAIMHPR) lie on the Cytoplasmic side of the membrane. Residues 140-158 (FCASLAGGAWLSGLITSLI) traverse the membrane as a helical segment. The Extracellular portion of the chain corresponds to 159 to 195 (QCSLTVQLPLCGHRTLDHIFCEVPVLIKLACVDTTFN). The chain crosses the membrane as a helical span at residues 196-219 (EAELFVASVVFLIVPVLLILVSYG). Topologically, residues 220 to 236 (FITQAVLRIKSAAGRQK) are cytoplasmic. The chain crosses the membrane as a helical span at residues 237–259 (AFGTCSSHLVVVIIFYGTIIFMY). The Extracellular portion of the chain corresponds to 260–272 (LQPANRRSKNQGK). The chain crosses the membrane as a helical span at residues 273-292 (FVSLFYTIVTPLLNPIIYTL). The Cytoplasmic segment spans residues 293–316 (RNKDVKGALRTLILGSAAGQSHKD).

Belongs to the G-protein coupled receptor 1 family.

The protein resides in the cell membrane. Its function is as follows. Odorant receptor. The chain is Olfactory receptor 2G6 (OR2G6) from Homo sapiens (Human).